Consider the following 237-residue polypeptide: Ribosomal RNA small subunit methyltransferase G (237 aa).

Residues glycine 78, phenylalanine 83, 129-130 (AE), and arginine 148 each bind S-adenosyl-L-methionine.

This sequence belongs to the methyltransferase superfamily. RNA methyltransferase RsmG family.

The protein localises to the cytoplasm. In terms of biological role, specifically methylates the N7 position of a guanine in 16S rRNA. This Streptococcus thermophilus (strain CNRZ 1066) protein is Ribosomal RNA small subunit methyltransferase G.